The sequence spans 551 residues: Probable CoA ligase CCL5 (551 aa).

ATP contacts are provided by residues 204-212 (SSGTTGASK), 345-350 (QGYGLT), Asp431, 443-446 (VVDR), and Lys537. Residues 274-345 (EIHEMLSAIE…ENYPTVSILQ (72 aa)) form an SBD1 region. The SBD2 stretch occupies residues 346 to 410 (GYGLTESTGI…LRGPTIMKGY (65 aa)).

Belongs to the ATP-dependent AMP-binding enzyme family. Mostly expressed at low levels in glandular trichomes (lupulin glands) after flowering, and, to a lower extent, in stems, leaves, cones and flowers.

It is found in the cytoplasm. It localises to the cytosol. This is Probable CoA ligase CCL5 from Humulus lupulus (European hop).